Consider the following 237-residue polypeptide: Sugar fermentation stimulation protein homolog (237 aa).

It belongs to the SfsA family.

This chain is Sugar fermentation stimulation protein homolog, found in Actinobacillus pleuropneumoniae serotype 3 (strain JL03).